The primary structure comprises 280 residues: uncharacterized protein (280 aa).

The HTH rpiR-type domain maps to 1 to 78; that stretch reads MDVIQRIKEK…VLLAQSISRA (78 aa). Residues 37–57 constitute a DNA-binding region (H-T-H motif); sequence ISDLSEKAGVKSEASVVKFYK. One can recognise an SIS domain in the interval 123–263; the sequence is TVDLFKNAQR…YTLLAARDPR (141 aa).

This is an uncharacterized protein from Thermotoga maritima (strain ATCC 43589 / DSM 3109 / JCM 10099 / NBRC 100826 / MSB8).